The following is a 210-amino-acid chain: Orotate phosphoribosyltransferase (210 aa).

Residues arginine 94, lysine 98, histidine 100, and 120–128 (EDLISTGGS) each bind 5-phospho-alpha-D-ribose 1-diphosphate. An orotate-binding site is contributed by serine 124.

The protein belongs to the purine/pyrimidine phosphoribosyltransferase family. PyrE subfamily. Homodimer. The cofactor is Mg(2+).

The catalysed reaction is orotidine 5'-phosphate + diphosphate = orotate + 5-phospho-alpha-D-ribose 1-diphosphate. Its pathway is pyrimidine metabolism; UMP biosynthesis via de novo pathway; UMP from orotate: step 1/2. In terms of biological role, catalyzes the transfer of a ribosyl phosphate group from 5-phosphoribose 1-diphosphate to orotate, leading to the formation of orotidine monophosphate (OMP). The sequence is that of Orotate phosphoribosyltransferase from Bacillus cereus (strain B4264).